The following is a 236-amino-acid chain: NLP effector protein 3 (236 aa).

A signal peptide spans 1–19; the sequence is MNLLGFLAVVALSTASVQA. The short motif at 103–113 is the Conserved undecapeptide motif I element; the sequence is AIMYSWYFPKD. Positions 120-126 match the Hepta-peptide GHRHDWE motif II motif; the sequence is GHRHDWE.

This sequence belongs to the Necrosis inducing protein (NPP1) family.

The protein resides in the secreted. In terms of biological role, secreted effector that contributes to virulence during infection by P.capsici. Induces distinct chlorosis at 3 days after inoculation of host C.annuum leaves, and all the chlorotic areas gradually turn brown and become moderately necrotic at 7 days after inoculation. Leads only to chlorotic areas, without necrosis at 7 days after non-host N.benthamiana leaves infection. Induces cell death in hot pepper. In Phytophthora capsici, this protein is NLP effector protein 3.